We begin with the raw amino-acid sequence, 1935 residues long: Myosin-7 (1935 aa).

The Myosin N-terminal SH3-like domain occupies D32–P81. The Myosin motor domain occupies D85 to D778. Residue K129 is modified to N6,N6,N6-trimethyllysine. ATP is bound at residue G178 to T185. At T378 the chain carries Phosphothreonine. Actin-binding regions lie at residues L655–E677 and K757–G771. Positions L781–S810 constitute an IQ domain. Residues L839–E1935 are a coiled coil. A phosphoserine mark is found at S1137 and S1269. T1282 is subject to Phosphothreonine. Y1308 is subject to Phosphotyrosine. T1309 is subject to Phosphothreonine. At S1510 the chain carries Phosphoserine. A Phosphothreonine modification is found at T1513. Positions E1907–E1935 are disordered. Over residues K1923–E1935 the composition is skewed to basic and acidic residues.

The protein belongs to the TRAFAC class myosin-kinesin ATPase superfamily. Myosin family. In terms of assembly, muscle myosin is a hexameric protein that consists of 2 heavy chain subunits (MHC), 2 alkali light chain subunits (MLC) and 2 regulatory light chain subunits (MLC-2). Interacts with ECPAS. Interacts (via C-terminus) with LRRC39.

The protein localises to the cytoplasm. It localises to the myofibril. The protein resides in the sarcomere. Functionally, myosins are actin-based motor molecules with ATPase activity essential for muscle contraction. Forms regular bipolar thick filaments that, together with actin thin filaments, constitute the fundamental contractile unit of skeletal and cardiac muscle. The polypeptide is Myosin-7 (MYH7) (Sus scrofa (Pig)).